Reading from the N-terminus, the 796-residue chain is MIPVAEFKQFTEQQPAFKVLKPWWDVLAEYLTVAMLMIGVFGCTLQVTQDKIICLPNHELQENLSEAPCQQLLPRGIPEQIGALQEVKGLKNNLDLQQYSFINQLCYETALHWYAKYFPYLVVIHTLIFMVCTSFWFKFPGTSSKIEHFISILGKCFDSPWTTRALSEVSGENQKGPAATERAAATIVAMAGTGPGKAGEGEKEKVLAEPEKVVTEPPVVTLLDKKEGEQAKALFEKVKKFRMHVEEGDILYTMYIRQTVLKVCKFLAILVYNLVYVEKISFLVACRVETSEVTGYASFCCNHTKAHLFSKLAFCYISFVCIYGLTCIYTLYWLFHRPLKEYSFRSVREETGMGDIPDVKNDFAFMLHLIDQYDSLYSKRFAVFLSEVSESRLKQLNLNHEWTPEKLRQKLQRNAAGRLELALCMLPGLPDTVFELSEVESLRLEAICDITFPPGLSQLVHLQELSLLHSPARLPFSLQVFLRDHLKVMRVKCEELREVPLWVFGLRGLEELHLEGLFPQELARAATLESLRELKQLKVLSLRSNAGKVPASVTDVAGHLQRLSLHNDGARLVALNSLKKLAALRELELVACGLERIPHAVFSLGALQELDLKDNHLRSIEEILSFQHCRKLVTLRLWHNQIAYVPEHVRKLRSLEQLYLSYNKLETLPSQLGLCSGLRLLDVSHNGLHSLPPEVGLLQNLQHLALSYNALEALPEELFFCRKLRTLLLGDNQLSQLSPHVGALRALSRLELKGNRLEALPEELGNCGGLKKAGLLVEDTLYQGLPAEVRDKMEEE.

At 1–22 the chain is on the cytoplasmic side; that stretch reads MIPVAEFKQFTEQQPAFKVLKP. Residues 23–43 traverse the membrane as a helical segment; that stretch reads WWDVLAEYLTVAMLMIGVFGC. Residues 44–116 lie on the Extracellular side of the membrane; the sequence is TLQVTQDKII…YETALHWYAK (73 aa). Cys-54 and Cys-301 are oxidised to a cystine. An N-linked (GlcNAc...) asparagine glycan is attached at Asn-63. The chain crosses the membrane as a helical span at residues 117-137; it reads YFPYLVVIHTLIFMVCTSFWF. Over 138–265 the chain is Cytoplasmic; sequence KFPGTSSKIE…IRQTVLKVCK (128 aa). A helical transmembrane segment spans residues 266-286; the sequence is FLAILVYNLVYVEKISFLVAC. The Extracellular segment spans residues 287 to 313; the sequence is RVETSEVTGYASFCCNHTKAHLFSKLA. Asn-302 carries N-linked (GlcNAc...) asparagine glycosylation. A helical membrane pass occupies residues 314 to 334; sequence FCYISFVCIYGLTCIYTLYWL. Over 335–796 the chain is Cytoplasmic; the sequence is FHRPLKEYSF…AEVRDKMEEE (462 aa). LRR repeat units follow at residues 508-529, 536-557, 559-579, 583-604, 606-627, 631-652, 654-675, 677-698, 700-721, 723-744, and 746-767; these read GLEE…ATLE, QLKV…TDVA, HLQR…NSLK, ALRE…VFSL, ALQE…LSFQ, KLVT…VRKL, SLEQ…LGLC, GLRL…VGLL, NLQH…LFFC, KLRT…VGAL, and ALSR…LGNC.

It belongs to the LRRC8 family. In terms of assembly, heterohexamer; oligomerizes with other LRRC8 proteins (LRRC8A, LRRC8C, LRRC8D and/or LRRC8B) to form a heterohexamer. In vivo, the subunit composition may depend primarily on expression levels, and heterooligomeric channels containing various proportions of the different LRRC8 proteins may coexist.

It localises to the cell membrane. It is found in the endoplasmic reticulum membrane. Its subcellular location is the lysosome membrane. It catalyses the reaction chloride(in) = chloride(out). The catalysed reaction is iodide(out) = iodide(in). The enzyme catalyses taurine(out) = taurine(in). It carries out the reaction 2',3'-cGAMP(out) = 2',3'-cGAMP(in). Functionally, non-essential component of the volume-regulated anion channel (VRAC, also named VSOAC channel), an anion channel required to maintain a constant cell volume in response to extracellular or intracellular osmotic changes. The VRAC channel conducts iodide better than chloride and can also conduct organic osmolytes like taurine. Mediates efflux of amino acids, such as aspartate, in response to osmotic stress. The VRAC channel also mediates transport of immunoreactive cyclic dinucleotide GMP-AMP (2'-3'-cGAMP), an immune messenger produced in response to DNA virus in the cytosol. Channel activity requires LRRC8A plus at least one other family member (LRRC8B, LRRC8C, LRRC8D or LRRC8E); channel characteristics depend on the precise subunit composition. Also plays a role in lysosome homeostasis by forming functional lysosomal VRAC channels in response to low cytoplasmic ionic strength condition: lysosomal VRAC channels are necessary for the formation of large lysosome-derived vacuoles, which store and then expel excess water to maintain cytosolic water homeostasis. In Homo sapiens (Human), this protein is Volume-regulated anion channel subunit LRRC8E.